Consider the following 530-residue polypeptide: Ubiquitin carboxyl-terminal hydrolase 17-like protein 18 (530 aa).

The 296-residue stretch at 80–375 (AGLQNMGNTC…QAYVLFYIQK (296 aa)) folds into the USP domain. Cys-89 functions as the Nucleophile in the catalytic mechanism. The active-site Proton acceptor is the His-334. Basic and acidic residues-rich tracts occupy residues 382–392 (SESVSRGREPR) and 398–413 (DTDR…RDHP). 2 disordered regions span residues 382 to 414 (SESV…DHPC) and 509 to 530 (RGRA…LVCQ). The span at 510–524 (GRARRSKGKNKHSKR) shows a compositional bias: basic residues.

The protein belongs to the peptidase C19 family. USP17 subfamily.

It localises to the nucleus. The protein localises to the endoplasmic reticulum. It carries out the reaction Thiol-dependent hydrolysis of ester, thioester, amide, peptide and isopeptide bonds formed by the C-terminal Gly of ubiquitin (a 76-residue protein attached to proteins as an intracellular targeting signal).. In terms of biological role, deubiquitinating enzyme that removes conjugated ubiquitin from specific proteins to regulate different cellular processes that may include cell proliferation, progression through the cell cycle, apoptosis, cell migration, and the cellular response to viral infection. This is Ubiquitin carboxyl-terminal hydrolase 17-like protein 18 (USP17L18) from Homo sapiens (Human).